A 91-amino-acid chain; its full sequence is MKILVAFAVIMLVSAQVLAAEIGLNDEPEWYSDQIQEDLPVFENFLQRIARKPSPDRFYGLMGKRNNGFGQMSRKRSAERNTIHNYERRRK.

The first 19 residues, M1–A19, serve as a signal peptide directing secretion. Positions A20–R51 are excised as a propeptide. M62 is subject to Methionine amide. The segment at K64–K91 is disordered. Positions N66–K91 are excised as a propeptide. Over residues R76 to K91 the composition is skewed to basic and acidic residues.

As to expression, expressed by the skin glands.

The protein localises to the secreted. Its function is as follows. Tachykinins are active peptides which excite neurons, evoke behavioral responses, are potent vasodilators and secretagogues, and contract (directly or indirectly) many smooth muscles. In vitro, induces contraction of guinea pig ileum smooth muscle in a dose-dependent manner. In Theloderma corticale (Kwangsi warty tree frog), this protein is Tachykinin-like peptide.